The following is a 455-amino-acid chain: Ribulose bisphosphate carboxylase large chain (455 aa).

An N6,N6,N6-trimethyllysine modification is found at K5. Residues N114 and T164 each coordinate substrate. Residue K166 is the Proton acceptor of the active site. K168 serves as a coordination point for substrate. K192, D194, and E195 together coordinate Mg(2+). Residue K192 is modified to N6-carboxylysine. Catalysis depends on H285, which acts as the Proton acceptor. Substrate contacts are provided by R286, H318, and S370.

The protein belongs to the RuBisCO large chain family. Type I subfamily. As to quaternary structure, heterohexadecamer of 8 large chains and 8 small chains; disulfide-linked. The disulfide link is formed within the large subunit homodimers. Mg(2+) is required as a cofactor. Post-translationally, the disulfide bond which can form in the large chain dimeric partners within the hexadecamer appears to be associated with oxidative stress and protein turnover.

It is found in the plastid. Its subcellular location is the chloroplast. The catalysed reaction is 2 (2R)-3-phosphoglycerate + 2 H(+) = D-ribulose 1,5-bisphosphate + CO2 + H2O. It catalyses the reaction D-ribulose 1,5-bisphosphate + O2 = 2-phosphoglycolate + (2R)-3-phosphoglycerate + 2 H(+). RuBisCO catalyzes two reactions: the carboxylation of D-ribulose 1,5-bisphosphate, the primary event in carbon dioxide fixation, as well as the oxidative fragmentation of the pentose substrate in the photorespiration process. Both reactions occur simultaneously and in competition at the same active site. This chain is Ribulose bisphosphate carboxylase large chain, found in Lupinus cosentinii (West Australian blue lupine).